We begin with the raw amino-acid sequence, 326 residues long: Ras association domain-containing protein 2 (326 aa).

Residues 176–264 form the Ras-associating domain; the sequence is YNHKTSVFTP…SKVFLMEKDQ (89 aa). Residues 272 to 319 form the SARAH domain; sequence VAQYIKFEMPVLKSFIQKLQEEEDREVEKLMRKYTVLRLMIRQRLEEI.

Interacts directly with activated KRAS in a GTP-dependent manner. Interacts (via SARAH domain) with STK3/MST2 and STK4/MST1. Post-translationally, phosphorylated by STK3/MST2 and STK4/MST1.

The protein resides in the nucleus. It is found in the cytoplasm. The protein localises to the chromosome. Its subcellular location is the centromere. It localises to the kinetochore. In terms of biological role, potential tumor suppressor. Acts as a KRAS-specific effector protein. May promote apoptosis and cell cycle arrest. Stabilizes STK3/MST2 by protecting it from proteasomal degradation. The sequence is that of Ras association domain-containing protein 2 (Rassf2) from Mus musculus (Mouse).